The chain runs to 326 residues: Probable cell division protein WhiA (326 aa).

Residues 275-308 constitute a DNA-binding region (H-T-H motif); that stretch reads SLDELGRLADPVMTKDAIAGRIRRLLAMADKRAL.

It belongs to the WhiA family.

Its function is as follows. Involved in cell division and chromosome segregation. This Pseudarthrobacter chlorophenolicus (strain ATCC 700700 / DSM 12829 / CIP 107037 / JCM 12360 / KCTC 9906 / NCIMB 13794 / A6) (Arthrobacter chlorophenolicus) protein is Probable cell division protein WhiA.